A 105-amino-acid chain; its full sequence is Large ribosomal subunit protein uL24 (105 aa).

The protein belongs to the universal ribosomal protein uL24 family. Part of the 50S ribosomal subunit.

In terms of biological role, one of two assembly initiator proteins, it binds directly to the 5'-end of the 23S rRNA, where it nucleates assembly of the 50S subunit. One of the proteins that surrounds the polypeptide exit tunnel on the outside of the subunit. In Dictyoglomus turgidum (strain DSM 6724 / Z-1310), this protein is Large ribosomal subunit protein uL24.